Here is a 168-residue protein sequence, read N- to C-terminus: Histone doublet miniH2B-H2A (168 aa).

Its subcellular location is the host nucleus. It is found in the host cytoplasm. The protein localises to the virion. Its function is as follows. Histone-like protein that is recruited to viral factories during viral replication and participates in viral DNA packaging and virion production probably by forming unstable nucleosome-like particles. May compact the viral DNA. The polypeptide is Histone doublet miniH2B-H2A (Melbournevirus (MelV)).